We begin with the raw amino-acid sequence, 1360 residues long: MNKSAIRYLSLLLVFLMGGSFLAGITTFGQTSSTAGGVTISVSNEWVGNDTVVLVAIYNPNVPQSAQGAKYVAGNVTISAGGVTVPLISNDTSNASVVYYLNNGQHYFWFFITMTPVPTTSASSLSMTETLTINSTSTNVQLTNPYLSFTTPVGNVQTDGKAGVFQLTLPSSFPNQLIGEYGQTVYGGHKVNITDLYFFSGDKTITISYSTGASVTINNYLADSSNYAATLQTTESTVPLNSTWQVYFVDNIMQANPLVGGNGGFMITANGTQVSPVIQNVSYLAVKNGVYVNTTVFANNPVPNAQAMFGYGNVYYGNFTMYTSSIVTNKTYATLLSGNNYTPANVSFSQYKMLITSGLFTTNTPITIYLSDWIGNNASVSIKGTIKETTLQSITLSVQKGENLTVNDFNNISNYSVRRNIMVYVALQNITGSTYKTAMVSLPETYAGSGVFSLPTVLRIGSSPSITYSTSQVTITLPPYDFSNTSLLITATNDIGASYYYLGSNTVKNISTPGTISVGTPTLVPIPNVVSVANVTPVIELAYTEPNLAFGTATTLTVSGTSVKYNGVQVATDSVTAVLPNGTVISGNLNGLSITSLTSANGNGTFFIVVPSTVIKTFLGTHTYIPSGTELTFKIYDEFAAQTLSVTYKFTTVAPVIAIKTPTSTSFSSAETAYLPPLPYNVVPEKHYISVNVTDTLYAQSVPSSALQTTLKIIVENPAGQKVGNVVTTVVSETAANSGLFTGKIYYTVYENSSGYWLNINGQNITNLKNVVNGGLIVFEYTSPSSQSTVNATALLEPSPFTLSVSQTSANPGQHVNVSVNSPGLVESSNMKFTGSLIIYAQFAEWNGPGSQPTIAVSPITLKEVSAGSPVFGGTIVLGNSSVVSSGNLTSLITTPGYTVAPGSVVLVNANATIGPTSTSSSITPYYQQQSISINVVDINVSILNPSPASPFAKLEIELQSPLFNLLTHPAAGNYTSAGTSAGILEGILSTITTQQSQQLVTSTQLVTSPKTSFYYNNTIWVIETPMTLWSGTPGSYGIPIEVNLTDLLTVTHNVYAIHVVEVPNVTTGTVSLVSAYAVPSVSSNVAQLQINGLVPPVISVFFNGNNITQSASAAIPFPNTTAGELVNVTVYAPDAVNNLNVPGSGTTFNVTIVNTANGETTTLTLTQMTKIIGGVAVPTPYYTGLLKVVEPTVYTPGTPGVISASSGVVNKVLVNMNLVEGQYYNTQGLLQQLRMKASSYFYVGVIKLSVLVSHFTILSNGTPVTGMQVGKSYSLLFNVTNNGNVNETIYGTLEVLLNGTPVQPEIVAQITLAPGQSTQIGTLFTPTMPGSYTITFIPFQNNLLSIPYNQGLTEVVTAS.

A signal peptide spans 1-24 (MNKSAIRYLSLLLVFLMGGSFLAG).

It belongs to the Sulfolobales SlaA family. The mushroom-shaped unit cells of the Sulfolobales' S-layers may consist of three SlaB subunits and six SlaA subunits.

The protein resides in the secreted. The protein localises to the cell wall. It localises to the S-layer. Functionally, S-layer large protein. May form the highly ordered outer sheath. The chain is S-layer protein A from Metallosphaera sedula (strain ATCC 51363 / DSM 5348 / JCM 9185 / NBRC 15509 / TH2).